A 92-amino-acid polypeptide reads, in one-letter code: Islet amyloid polypeptide (92 aa).

A signal peptide spans 1–22; the sequence is MCLLRLPVTLLVLCVALNELKA. Positions 23–34 are excised as a propeptide; sequence TSIASDTGHQVG. Cys38 and Cys43 are disulfide-bonded. Tyr73 carries the tyrosine amide modification. A propeptide spanning residues 77 to 92 is cleaved from the precursor; it reads NAPQISDRELLHYLPL.

It belongs to the calcitonin family. As to quaternary structure, can form homodimers. Interacts with IDE and INS. Interaction with INS inhibits homodimerization and fibril formation.

It is found in the secreted. In terms of biological role, amylin/IAPP is a glucoregulatory peptide hormone that plays an important role in the regulation of energy homeostasis. Selectively inhibits insulin-stimulated glucose utilization and glycogen deposition in muscle, while not affecting adipocyte glucose metabolism. IAPP function is mediated by the CALCR-RAMPs (AMYRs) receptor complexes. Amylin can also bind CALCR receptor in the absence of RAMPs, although it is more selective for AMYRs. The protein is Islet amyloid polypeptide (IAPP) of Cavia porcellus (Guinea pig).